Consider the following 357-residue polypeptide: Probable nitronate monooxygenase (357 aa).

Residues Asn71, Gln175, Gly180, Gly219, and Gln238–Thr241 contribute to the FMN site.

It belongs to the nitronate monooxygenase family. NMO class I subfamily. FMN serves as cofactor.

The catalysed reaction is 3 propionate 3-nitronate + 3 O2 + H2O = 3 3-oxopropanoate + 2 nitrate + nitrite + H2O2 + 3 H(+). Functionally, nitronate monooxygenase that uses molecular oxygen to catalyze the oxidative denitrification of alkyl nitronates. Acts on propionate 3-nitronate (P3N), the presumed physiological substrate. Probably functions in the detoxification of P3N, a metabolic poison produced by plants and fungi as a defense mechanism. This chain is Probable nitronate monooxygenase, found in Staphylococcus haemolyticus (strain JCSC1435).